We begin with the raw amino-acid sequence, 400 residues long: Large envelope protein (400 aa).

Met1 is subject to N-acetylmethionine. Gly2 is lipidated: N-myristoyl glycine; by host. Residues Gly2–Ala119 form a pre-S1 region. The segment at Gly2–Asn174 is pre-S. The Virion surface; in external conformation portion of the chain corresponds to Gly2–Gly181. Over Gly2–Arg253 the chain is Intravirion; in internal conformation. Pro4 carries N-linked (GlcNAc...) asparagine glycosylation. The tract at residues Pro70–Thr115 is disordered. Residues Pro79–Ser88 are compositionally biased toward polar residues. Positions Met120–Asn174 are pre-S2. The chain crosses the membrane as a helical span at residues Leu182 to Ile202. Topologically, residues Pro203–Arg253 are intravirion; in external conformation. The helical transmembrane segment at Phe254–Tyr274 threads the bilayer. At Gln275–Ser348 the chain is on the virion surface side. Residue Asn320 is glycosylated (N-linked (GlcNAc...) asparagine; by host). Residues Leu349–Ile369 traverse the membrane as a helical segment. The Intravirion segment spans residues Trp370–Trp375. The chain crosses the membrane as a helical span at residues Gly376–Ala398. Over Ser399–Ile400 the chain is Virion surface.

This sequence belongs to the orthohepadnavirus major surface antigen family. In terms of assembly, in its internal form (Li-HBsAg), interacts with the capsid protein and with the isoform S. Interacts with host chaperone CANX. As to quaternary structure, associates with host chaperone CANX through its pre-S2 N glycan; this association may be essential for isoform M proper secretion. Interacts with isoform L. Interacts with the antigens of satellite virus HDV (HDVAgs); this interaction is required for encapsidation of HDV genomic RNA. In terms of processing, isoform M is N-terminally acetylated by host at a ratio of 90%, and N-glycosylated by host at the pre-S2 region. Post-translationally, myristoylated.

The protein localises to the virion membrane. Functionally, the large envelope protein exists in two topological conformations, one which is termed 'external' or Le-HBsAg and the other 'internal' or Li-HBsAg. In its external conformation the protein attaches the virus to cell receptors and thereby initiating infection. This interaction determines the species specificity and liver tropism. This attachment induces virion internalization predominantly through caveolin-mediated endocytosis. The large envelope protein also assures fusion between virion membrane and endosomal membrane. In its internal conformation the protein plays a role in virion morphogenesis and mediates the contact with the nucleocapsid like a matrix protein. In terms of biological role, the middle envelope protein plays an important role in the budding of the virion. It is involved in the induction of budding in a nucleocapsid independent way. In this process the majority of envelope proteins bud to form subviral lipoprotein particles of 22 nm of diameter that do not contain a nucleocapsid. In Homo sapiens (Human), this protein is Large envelope protein.